Consider the following 485-residue polypeptide: DNA polymerase subunit gamma-2 (485 aa).

The tract at residues 28–65 (GQPELLTERSSPKGGHVKSHAELEGNGEHPEAPGSGEG) is disordered. Ser-38 bears the Phosphoserine mark. A compositionally biased stretch (basic and acidic residues) spans 46-58 (SHAELEGNGEHPE).

As to quaternary structure, heterotrimer composed of a catalytic subunit and a homodimer of accessory subunits (POLG:POLG2).

It localises to the mitochondrion. The protein resides in the mitochondrion matrix. Its subcellular location is the mitochondrion nucleoid. Its function is as follows. Accessory subunit of DNA polymerase gamma solely responsible for replication of mitochondrial DNA (mtDNA). Acts as an allosteric regulator of the holoenzyme activities. Enhances the polymerase activity and the processivity of POLG by increasing its interactions with the DNA template. Suppresses POLG exonucleolytic proofreading especially toward homopolymeric templates bearing mismatched termini. Binds to single-stranded DNA. This chain is DNA polymerase subunit gamma-2, found in Homo sapiens (Human).